We begin with the raw amino-acid sequence, 454 residues long: Diaminobutyrate--2-oxoglutarate aminotransferase (454 aa).

An N6-(pyridoxal phosphate)lysine modification is found at lysine 287.

It belongs to the class-III pyridoxal-phosphate-dependent aminotransferase family. Requires pyridoxal 5'-phosphate as cofactor.

The enzyme catalyses L-2,4-diaminobutanoate + 2-oxoglutarate = L-aspartate 4-semialdehyde + L-glutamate. It participates in amine and polyamine biosynthesis; 1,3-diaminopropane biosynthesis; 1,3-diaminopropane from L-aspartate 4-semialdehyde: step 1/2. The sequence is that of Diaminobutyrate--2-oxoglutarate aminotransferase (dat) from Haemophilus influenzae (strain ATCC 51907 / DSM 11121 / KW20 / Rd).